The following is a 329-amino-acid chain: Short-chain dehydrogenase/reductase tropG (329 aa).

5 residues coordinate NADP(+): K57, D86, N113, Y203, and K207. Residue Y203 is the Proton acceptor of the active site. Catalysis depends on K207, which acts as the Lowers pKa of active site Tyr.

It belongs to the short-chain dehydrogenases/reductases (SDR) family.

Its pathway is secondary metabolite biosynthesis. In terms of biological role, short-chain dehydrogenase/reductase; part of the gene cluster that mediates the biosynthesis of the tropolone class of fungal maleic anhydrides. The pathway begins with the synthesis of 3-methylorcinaldehyde by the non-reducing polyketide synthase (PKS) tropA. 3-methylorcinaldehyde is the substrate for the FAD-dependent monooxygenase tropB to yield a dearomatized hydroxycyclohexadione. The 2-oxoglutarate-dependent dioxygenase tropC then performs the oxidative ring expansion to provide the first tropolone metabolite stipitaldehyde. Trop D converts stipitaldehyde into stipitacetal which is in turn converted to stipitalide by the short-chain dehydrogenase/reductase tropE. The next steps involve tropF, tropG, tropH, tropI and tropJ to form successive tropolone maleic anhydrides including stipitaldehydic, stipitatonic and stipitatic acids. This is Short-chain dehydrogenase/reductase tropG from Talaromyces stipitatus (strain ATCC 10500 / CBS 375.48 / QM 6759 / NRRL 1006) (Penicillium stipitatum).